The primary structure comprises 347 residues: GMP reductase (347 aa).

108–131 (ADFEKTKQILDLNPALNFVCIDVA) is a binding site for NADP(+). Residues glycine 181 and glycine 183 each contribute to the K(+) site. Residue cysteine 186 is the Thioimidate intermediate of the active site. Position 216-239 (216-239 (IISDGGCTTPGDVAKAFGGGADFV)) interacts with NADP(+).

Belongs to the IMPDH/GMPR family. GuaC type 1 subfamily. As to quaternary structure, homotetramer.

The catalysed reaction is IMP + NH4(+) + NADP(+) = GMP + NADPH + 2 H(+). Its function is as follows. Catalyzes the irreversible NADPH-dependent deamination of GMP to IMP. It functions in the conversion of nucleobase, nucleoside and nucleotide derivatives of G to A nucleotides, and in maintaining the intracellular balance of A and G nucleotides. The sequence is that of GMP reductase from Escherichia coli O157:H7.